Reading from the N-terminus, the 251-residue chain is Pyrroloquinoline-quinone synthase (251 aa).

It belongs to the PqqC family.

The enzyme catalyses 6-(2-amino-2-carboxyethyl)-7,8-dioxo-1,2,3,4,7,8-hexahydroquinoline-2,4-dicarboxylate + 3 O2 = pyrroloquinoline quinone + 2 H2O2 + 2 H2O + H(+). It functions in the pathway cofactor biosynthesis; pyrroloquinoline quinone biosynthesis. Its function is as follows. Ring cyclization and eight-electron oxidation of 3a-(2-amino-2-carboxyethyl)-4,5-dioxo-4,5,6,7,8,9-hexahydroquinoline-7,9-dicarboxylic-acid to PQQ. This chain is Pyrroloquinoline-quinone synthase, found in Pseudomonas putida (strain GB-1).